A 532-amino-acid chain; its full sequence is uncharacterized protein (532 aa).

5 consecutive transmembrane segments (helical) span residues Tyr-11–Ile-31, Ile-51–Phe-71, Leu-126–Trp-146, Ile-147–Phe-167, and Tyr-231–Ile-253. Residues Ile-315–Ile-531 enclose the ABC transporter domain. Gly-349–Ser-356 lines the ATP pocket.

It localises to the membrane. This is an uncharacterized protein from Acanthamoeba polyphaga mimivirus (APMV).